Consider the following 404-residue polypeptide: MMTYEYILVRYGEMTTKGKNRSKFVSTLKDNVKFKLKKFPNIKIDATHDRMYIQLNGEDHEAVSERLKDVFGIHKFNLAMKVPSELEDIKKGALAAFLQVKGDVKTFKITVHRSYKHFPMRTMELLPEIGGHILENTEDITVDVHNPDVNVRVEIRSGYSYIMCDERMGAGGLPVGVGGKVMVLLSGGIDSPVAAYLTMKRGVSVEAVHFHSPPFTSERAKQKVIDLAQELTKYCKRVTLHLVPFTEVQKTINKEIPSSYSMTVMRRMMMRITERIAEERNALAITTGESLGQVASQTLDSMHTINEVTNYPVIRPLITMDKLEIIKIAEEIGTYDISIRPYEDCCTVFTPASPATKPKREKANRFEAKYDFTTLIDEAVANKETVVLQTVEVVAEEEKFEELF.

Residues 61 to 166 (EAVSERLKDV…SGYSYIMCDE (106 aa)) enclose the THUMP domain. ATP contacts are provided by residues 184-185 (LL), 209-210 (HF), R266, G288, and Q297.

The protein belongs to the ThiI family.

Its subcellular location is the cytoplasm. The enzyme catalyses [ThiI sulfur-carrier protein]-S-sulfanyl-L-cysteine + a uridine in tRNA + 2 reduced [2Fe-2S]-[ferredoxin] + ATP + H(+) = [ThiI sulfur-carrier protein]-L-cysteine + a 4-thiouridine in tRNA + 2 oxidized [2Fe-2S]-[ferredoxin] + AMP + diphosphate. The catalysed reaction is [ThiS sulfur-carrier protein]-C-terminal Gly-Gly-AMP + S-sulfanyl-L-cysteinyl-[cysteine desulfurase] + AH2 = [ThiS sulfur-carrier protein]-C-terminal-Gly-aminoethanethioate + L-cysteinyl-[cysteine desulfurase] + A + AMP + 2 H(+). Its pathway is cofactor biosynthesis; thiamine diphosphate biosynthesis. In terms of biological role, catalyzes the ATP-dependent transfer of a sulfur to tRNA to produce 4-thiouridine in position 8 of tRNAs, which functions as a near-UV photosensor. Also catalyzes the transfer of sulfur to the sulfur carrier protein ThiS, forming ThiS-thiocarboxylate. This is a step in the synthesis of thiazole, in the thiamine biosynthesis pathway. The sulfur is donated as persulfide by IscS. This Bacillus cereus (strain ATCC 10987 / NRS 248) protein is Probable tRNA sulfurtransferase.